A 139-amino-acid chain; its full sequence is MYNPWQVGASLAPARAGPRPFPTPRARPPDCSGGHAPSGFPALGLRTAQRPRPFSSSPRSASGRLRGPRPVARGPAHSSSPTGLPAYLPPAAALDSQTSAPTVSPVTRPRVVARGKTPRVSLAGLETLSSLLHQQQLFD.

Residues 1–116 (MYNPWQVGAS…TRPRVVARGK (116 aa)) are disordered. Composition is skewed to low complexity over residues 50–70 (RPRPFSSSPRSASGRLRGPRP) and 84–110 (LPAYLPPAAALDSQTSAPTVSPVTRPR).

This is an uncharacterized protein from Homo sapiens (Human).